We begin with the raw amino-acid sequence, 935 residues long: Dual 3',5'-cyclic-AMP and -GMP phosphodiesterase 11A (935 aa).

Residues 41–125 (RHSSGQGASD…ASQKELRKSF (85 aa)) are disordered. Residues 54–69 (ALAGASSLAQSSARGS) show a composition bias toward low complexity. Serine 162, serine 163, and serine 239 each carry phosphoserine. 2 GAF domains span residues 217–370 (DLTS…GIAI) and 402–558 (DLEK…GLGI). Serine 424 is a binding site for 3',5'-cyclic GMP. The PDEase domain maps to 588-912 (SKAEVDKFKA…RKWEELHQKR (325 aa)). The active-site Proton donor is the histidine 664. Residues histidine 668, histidine 704, aspartate 705, and aspartate 816 each coordinate a divalent metal cation. A disordered region spans residues 915 to 935 (VSAASPVPSSPSPAVAGEDRL).

Belongs to the cyclic nucleotide phosphodiesterase family. A divalent metal cation is required as a cofactor. Isoform 1 is expressed in brain, heart, kidney and liver, but not in prostate. Isoform 2 is specifically expressed in testis. Isoform 3 is expressed in various tissues including brain, lung, skeletal muscle, spleen, testis and prostate.

Its subcellular location is the cytoplasm. It localises to the cytosol. It carries out the reaction 3',5'-cyclic GMP + H2O = GMP + H(+). The catalysed reaction is 3',5'-cyclic AMP + H2O = AMP + H(+). With respect to regulation, inhibited by 3-isobutyl-1-methylxanthine (IBMX), zaprinast and dipyridamole. cGMP acts as an allosteric activator. In terms of biological role, plays a role in signal transduction by regulating the intracellular concentration of cyclic nucleotides cAMP and cGMP. Catalyzes the hydrolysis of both cAMP and cGMP to 5'-AMP and 5'-GMP, respectively. This is Dual 3',5'-cyclic-AMP and -GMP phosphodiesterase 11A from Rattus norvegicus (Rat).